Here is a 349-residue protein sequence, read N- to C-terminus: Holliday junction branch migration complex subunit RuvB (349 aa).

The segment at 1 to 181 (MDDRILTSVN…FGVLCPMEFY (181 aa)) is large ATPase domain (RuvB-L). ATP is bound by residues leucine 20, arginine 21, glycine 62, lysine 65, threonine 66, threonine 67, 128 to 130 (EDY), arginine 171, tyrosine 181, and arginine 218. Position 66 (threonine 66) interacts with Mg(2+). A small ATPAse domain (RuvB-S) region spans residues 182 to 252 (NDEELKEIIV…SAKKALNLLE (71 aa)). A head domain (RuvB-H) region spans residues 255–349 (DEGFDSIDNK…DQCSFFKKEK (95 aa)). Arginine 310 and arginine 315 together coordinate DNA.

This sequence belongs to the RuvB family. Homohexamer. Forms an RuvA(8)-RuvB(12)-Holliday junction (HJ) complex. HJ DNA is sandwiched between 2 RuvA tetramers; dsDNA enters through RuvA and exits via RuvB. An RuvB hexamer assembles on each DNA strand where it exits the tetramer. Each RuvB hexamer is contacted by two RuvA subunits (via domain III) on 2 adjacent RuvB subunits; this complex drives branch migration. In the full resolvosome a probable DNA-RuvA(4)-RuvB(12)-RuvC(2) complex forms which resolves the HJ.

It localises to the cytoplasm. The catalysed reaction is ATP + H2O = ADP + phosphate + H(+). The RuvA-RuvB-RuvC complex processes Holliday junction (HJ) DNA during genetic recombination and DNA repair, while the RuvA-RuvB complex plays an important role in the rescue of blocked DNA replication forks via replication fork reversal (RFR). RuvA specifically binds to HJ cruciform DNA, conferring on it an open structure. The RuvB hexamer acts as an ATP-dependent pump, pulling dsDNA into and through the RuvAB complex. RuvB forms 2 homohexamers on either side of HJ DNA bound by 1 or 2 RuvA tetramers; 4 subunits per hexamer contact DNA at a time. Coordinated motions by a converter formed by DNA-disengaged RuvB subunits stimulates ATP hydrolysis and nucleotide exchange. Immobilization of the converter enables RuvB to convert the ATP-contained energy into a lever motion, pulling 2 nucleotides of DNA out of the RuvA tetramer per ATP hydrolyzed, thus driving DNA branch migration. The RuvB motors rotate together with the DNA substrate, which together with the progressing nucleotide cycle form the mechanistic basis for DNA recombination by continuous HJ branch migration. Branch migration allows RuvC to scan DNA until it finds its consensus sequence, where it cleaves and resolves cruciform DNA. This chain is Holliday junction branch migration complex subunit RuvB, found in Clostridium acetobutylicum (strain ATCC 824 / DSM 792 / JCM 1419 / IAM 19013 / LMG 5710 / NBRC 13948 / NRRL B-527 / VKM B-1787 / 2291 / W).